Reading from the N-terminus, the 261-residue chain is Ribosomal RNA small subunit methyltransferase J (261 aa).

S-adenosyl-L-methionine-binding positions include 109-110, 125-126, and aspartate 179; these read RD and ER.

Belongs to the methyltransferase superfamily. RsmJ family.

The protein localises to the cytoplasm. The enzyme catalyses guanosine(1516) in 16S rRNA + S-adenosyl-L-methionine = N(2)-methylguanosine(1516) in 16S rRNA + S-adenosyl-L-homocysteine + H(+). Functionally, specifically methylates the guanosine in position 1516 of 16S rRNA. In Pseudomonas aeruginosa (strain LESB58), this protein is Ribosomal RNA small subunit methyltransferase J.